Consider the following 525-residue polypeptide: NAD(P)H-quinone oxidoreductase chain 4-1 (525 aa).

14 helical membrane passes run 4–24 (FPWL…IPII), 37–57 (LAVG…GFDL), 89–109 (LIIL…PVTL), 111–131 (PKLF…VFAV), 134–154 (ILLF…ILSI), 167–187 (FILY…TLAF), 210–230 (LLLY…FPLH), 241–261 (TAPA…YALL), 273–293 (AVFA…AAFT), 309–329 (ISHM…GMSG), 330–350 (AMLQ…MVGA), 385–405 (LALP…GFAT), 416–436 (IVVV…LSML), and 462–482 (VFII…PKLI).

Belongs to the complex I subunit 4 family.

It is found in the cellular thylakoid membrane. The enzyme catalyses a plastoquinone + NADH + (n+1) H(+)(in) = a plastoquinol + NAD(+) + n H(+)(out). It carries out the reaction a plastoquinone + NADPH + (n+1) H(+)(in) = a plastoquinol + NADP(+) + n H(+)(out). In terms of biological role, NDH-1 shuttles electrons from NAD(P)H, via FMN and iron-sulfur (Fe-S) centers, to quinones in the respiratory chain. The immediate electron acceptor for the enzyme in this species is believed to be plastoquinone. Couples the redox reaction to proton translocation (for every two electrons transferred, four hydrogen ions are translocated across the cytoplasmic membrane), and thus conserves the redox energy in a proton gradient. This chain is NAD(P)H-quinone oxidoreductase chain 4-1 (ndhD1), found in Synechocystis sp. (strain ATCC 27184 / PCC 6803 / Kazusa).